A 367-amino-acid polypeptide reads, in one-letter code: 3-isopropylmalate dehydrogenase (367 aa).

77-90 (GPKYDDLDFSVKPE) provides a ligand contact to NAD(+). Substrate contacts are provided by R97, R107, R135, and D224. Positions 224, 248, and 252 each coordinate Mg(2+). Residue 287 to 299 (GSAPDIAGQGKAN) coordinates NAD(+).

The protein belongs to the isocitrate and isopropylmalate dehydrogenases family. LeuB type 1 subfamily. As to quaternary structure, homodimer. Requires Mg(2+) as cofactor. Mn(2+) serves as cofactor.

The protein localises to the cytoplasm. It catalyses the reaction (2R,3S)-3-isopropylmalate + NAD(+) = 4-methyl-2-oxopentanoate + CO2 + NADH. It functions in the pathway amino-acid biosynthesis; L-leucine biosynthesis; L-leucine from 3-methyl-2-oxobutanoate: step 3/4. In terms of biological role, catalyzes the oxidation of 3-carboxy-2-hydroxy-4-methylpentanoate (3-isopropylmalate) to 3-carboxy-4-methyl-2-oxopentanoate. The product decarboxylates to 4-methyl-2 oxopentanoate. The sequence is that of 3-isopropylmalate dehydrogenase from Ruegeria pomeroyi (strain ATCC 700808 / DSM 15171 / DSS-3) (Silicibacter pomeroyi).